The primary structure comprises 210 residues: Large ribosomal subunit protein uL3 (210 aa).

Residues Asn122–Val155 are disordered.

It belongs to the universal ribosomal protein uL3 family. In terms of assembly, part of the 50S ribosomal subunit. Forms a cluster with proteins L14 and L19.

Functionally, one of the primary rRNA binding proteins, it binds directly near the 3'-end of the 23S rRNA, where it nucleates assembly of the 50S subunit. The sequence is that of Large ribosomal subunit protein uL3 from Nostoc punctiforme (strain ATCC 29133 / PCC 73102).